The following is a 348-amino-acid chain: Selenide, water dikinase (348 aa).

The active site involves cysteine 17. Residues lysine 20 and 48–50 (TRD) contribute to the ATP site. Mg(2+) is bound at residue aspartate 51. ATP contacts are provided by residues aspartate 68, aspartate 91, and 139 to 141 (GHS). Aspartate 91 serves as a coordination point for Mg(2+). Residue aspartate 227 participates in Mg(2+) binding.

It belongs to the selenophosphate synthase 1 family. Class I subfamily. As to quaternary structure, homodimer. Mg(2+) is required as a cofactor.

The enzyme catalyses hydrogenselenide + ATP + H2O = selenophosphate + AMP + phosphate + 2 H(+). Synthesizes selenophosphate from selenide and ATP. This Yersinia pseudotuberculosis serotype I (strain IP32953) protein is Selenide, water dikinase.